We begin with the raw amino-acid sequence, 281 residues long: Pantothenate synthetase (281 aa).

31–38 (MGNLHAGH) is a binding site for ATP. The active-site Proton donor is the His-38. Gln-62 lines the (R)-pantoate pocket. Gln-62 is a beta-alanine binding site. 150–153 (GKKD) is an ATP binding site. Residue Gln-156 coordinates (R)-pantoate. ATP contacts are provided by residues Val-179 and 187-190 (MSSR).

The protein belongs to the pantothenate synthetase family. Homodimer.

It localises to the cytoplasm. It carries out the reaction (R)-pantoate + beta-alanine + ATP = (R)-pantothenate + AMP + diphosphate + H(+). Its pathway is cofactor biosynthesis; (R)-pantothenate biosynthesis; (R)-pantothenate from (R)-pantoate and beta-alanine: step 1/1. Functionally, catalyzes the condensation of pantoate with beta-alanine in an ATP-dependent reaction via a pantoyl-adenylate intermediate. The sequence is that of Pantothenate synthetase from Xylella fastidiosa (strain 9a5c).